The following is a 78-amino-acid chain: Large ribosomal subunit protein bL28 (78 aa).

Positions 1–24 (MSKVCQVTGKRPASGNNVSHAHNK) are disordered.

This sequence belongs to the bacterial ribosomal protein bL28 family.

This is Large ribosomal subunit protein bL28 from Nitrosococcus oceani (strain ATCC 19707 / BCRC 17464 / JCM 30415 / NCIMB 11848 / C-107).